Here is a 156-residue protein sequence, read N- to C-terminus: MSRRNAAVKRPILPDPQFNNRLATMMVARLMKHGKKSTAQRILSDAFGMIGERTGGDPVELFETAVKNATPLVEVRARRVGGATYQVPMEVRQERGTAMALRWLVNFSRARNGRSMAQKLAGELMDAANEAGSAVRKREETHKMAEANKAFAHYRY.

The protein belongs to the universal ribosomal protein uS7 family. As to quaternary structure, part of the 30S ribosomal subunit. Contacts proteins S9 and S11.

Functionally, one of the primary rRNA binding proteins, it binds directly to 16S rRNA where it nucleates assembly of the head domain of the 30S subunit. Is located at the subunit interface close to the decoding center, probably blocks exit of the E-site tRNA. This chain is Small ribosomal subunit protein uS7, found in Synechococcus sp. (strain CC9311).